A 458-amino-acid polypeptide reads, in one-letter code: Preferentially expressed antigen in melanoma-like protein 1 (458 aa).

An LRR 1; degenerate repeat occupies 99–126; sequence RCKLQVLDLRVMPLKLWNRLPVFGTAGC. Residues 176–200 form an LRR 2; degenerate repeat; that stretch reads SLCCCKLQIWAMSMYYHRKLLEILD. The stretch at 201–227 is one LRR 3; degenerate repeat; it reads LDSVQELRMYCISNPVCLLNFAPYLGR. An LRR 4; degenerate repeat occupies 228 to 263; it reads MRNLRCLILSHLWQTFSMTPVEKQQVITQFTSQFLK. LRR repeat units follow at residues 264 to 289, 290 to 321, 322 to 340, 346 to 373, and 374 to 398; these read LKCL…FWWL, KTPL…SQLK, HLNL…PLRV, ASTL…ALRC, and CTQL…LAYN.

It belongs to the PRAME family. As to expression, specifically expressed in testis (at protein level).

Its subcellular location is the cytoplasm. The protein localises to the cytoplasmic vesicle. The protein resides in the secretory vesicle. It localises to the acrosome. It is found in the cell projection. Its subcellular location is the cilium. The protein localises to the flagellum. Its function is as follows. May play a role in acrosome development and also in sperm maturation and motility. The protein is Preferentially expressed antigen in melanoma-like protein 1 of Mus musculus (Mouse).